Reading from the N-terminus, the 526-residue chain is Na(+)/H(+) antiporter NhaB (526 aa).

The next 12 helical transmembrane spans lie at 25–45 (ILLFLLINPIAFYLDPFIAGW), 52–72 (IFTLAMALKCYPLQPGGLLAI), 89–109 (LVANIEVLLLLVFMVAGIYFM), 130–164 (LSLAFCLVSAFLSAFLDALTVIAVVISVATGFYAI), 204–224 (LMMHAAIGTALGGVCTLVGEP), 242–262 (IRMSPVTVPVFICGLLTCVLV), 307–327 (IALWLILGLAMHLAAVGLIGL), 350–370 (QEALPFTALLAVFFSVVAVII), 391–411 (LALFYLANGLLSMVSDNVFVG), 448–468 (VATPNGQAAFLFMLTSALAPL), 479–499 (MALPYTLVLGLVGFFSVEMLL), and 505–525 (WFYQAGWLVLDNVAPAALPVL).

Belongs to the NhaB Na(+)/H(+) (TC 2.A.34) antiporter family.

It is found in the cell inner membrane. It carries out the reaction 2 Na(+)(in) + 3 H(+)(out) = 2 Na(+)(out) + 3 H(+)(in). Its function is as follows. Na(+)/H(+) antiporter that extrudes sodium in exchange for external protons. The protein is Na(+)/H(+) antiporter NhaB of Aeromonas hydrophila subsp. hydrophila (strain ATCC 7966 / DSM 30187 / BCRC 13018 / CCUG 14551 / JCM 1027 / KCTC 2358 / NCIMB 9240 / NCTC 8049).